The following is a 409-amino-acid chain: Isocitrate dehydrogenase [NADP] 1 (409 aa).

Positions 75, 78, 80, and 85 each coordinate NADP(+). The Mn(2+) site is built by D255, D278, and D282. The NADP(+) site is built by G313, T314, V315, H318, and N331.

It belongs to the isocitrate and isopropylmalate dehydrogenases family. As to quaternary structure, homodimer. It depends on Mg(2+) as a cofactor. Mn(2+) serves as cofactor.

The catalysed reaction is D-threo-isocitrate + NADP(+) = 2-oxoglutarate + CO2 + NADPH. Its function is as follows. Catalyzes the oxidative decarboxylation of isocitrate to 2-oxoglutarate and carbon dioxide with the concomitant reduction of NADP(+). This chain is Isocitrate dehydrogenase [NADP] 1 (icd), found in Mycobacterium bovis (strain ATCC BAA-935 / AF2122/97).